A 450-amino-acid chain; its full sequence is LanC-like protein 2 (450 aa).

The N-myristoyl glycine moiety is linked to residue G2. Residues 2-15 (GETMSKRLKLHLGG) are interaction with inositol phospholipids. Y198 bears the Phosphotyrosine mark.

It belongs to the LanC-like protein family. As to quaternary structure, interacts with an array of inositol phospholipids such as phosphatidylinositol 3-phosphate (PI3P), phosphatidylinositol 4-phosphate (PI4P) and phosphatidylinositol 5-phosphate (PI5P). PIP-binding enhances membrane association. Post-translationally, myristoylated. Essential for membrane association. Expressed in brain and testis.

It localises to the nucleus. It is found in the cytoplasm. The protein localises to the cell membrane. In terms of biological role, necessary for abscisic acid (ABA) binding on the cell membrane and activation of the ABA signaling pathway in granulocytes. In Homo sapiens (Human), this protein is LanC-like protein 2 (LANCL2).